Here is a 135-residue protein sequence, read N- to C-terminus: C-type lectin Cal (135 aa).

4 disulfide bridges follow: Cys-3-Cys-14, Cys-31-Cys-131, Cys-38-Cys-133, and Cys-106-Cys-123. Residues 10-132 (MNGLCYKIFN…CESKDAFLCQ (123 aa)) enclose the C-type lectin domain. The Ca(2+) site is built by Gln-96, Asp-98, Glu-104, Asn-119, and Asp-120. The short motif at 96-98 (QPD) is the Galactose-binding element.

The protein belongs to the true venom lectin family. Homodecamer of disulfide-linked dimers arranged in two pseudo-5-fold symmetric pentamers. In terms of tissue distribution, expressed by the venom gland.

It localises to the secreted. Functionally, galactose-binding protein which recognizes specific carbohydrate structures and agglutinates a variety of animal cells by binding to cell-surface glycoproteins and glycolipids. Calcium-dependent lectin. Shows high hemagglutinating activity (MHC=10 ng/ml). This Crotalus atrox (Western diamondback rattlesnake) protein is C-type lectin Cal.